The chain runs to 34 residues: Papillosin (34 aa).

In terms of biological role, has strong antibacterial activity against the Gram-positive bacteria M.luteus, S.aureus, B.megaterium, A.viridans and E.faecalis, and against the Gram-negative bacteria K.pneumoniae, E.coli DH5alpha, S.typhimurium, P.aeruginosa and E.aerogenes. Lacks hemolytic activity against sheep erythrocytes. This is Papillosin from Halocynthia papillosa (Red sea-squirt).